A 491-amino-acid polypeptide reads, in one-letter code: Cytochrome P450 2H1 (491 aa).

Cys436 contributes to the heme binding site.

This sequence belongs to the cytochrome P450 family. The cofactor is heme. In terms of tissue distribution, expressed in liver.

The protein resides in the endoplasmic reticulum membrane. It is found in the microsome membrane. The catalysed reaction is an organic molecule + reduced [NADPH--hemoprotein reductase] + O2 = an alcohol + oxidized [NADPH--hemoprotein reductase] + H2O + H(+). Cytochromes P450 are a group of heme-thiolate monooxygenases. In liver microsomes, this enzyme is involved in an NADPH-dependent electron transport pathway. It oxidizes a variety of structurally unrelated compounds, including steroids, fatty acids, and xenobiotics. The polypeptide is Cytochrome P450 2H1 (CYP2H1) (Gallus gallus (Chicken)).